We begin with the raw amino-acid sequence, 160 residues long: Ribosomal RNA large subunit methyltransferase H (160 aa).

Residues 44-63 (LPESRASNSATRKREEAVQI) form a disordered region. S-adenosyl-L-methionine is bound by residues leucine 76, glycine 108, and 127–132 (LGKMTW).

The protein belongs to the RNA methyltransferase RlmH family. Homodimer.

The protein localises to the cytoplasm. The catalysed reaction is pseudouridine(1915) in 23S rRNA + S-adenosyl-L-methionine = N(3)-methylpseudouridine(1915) in 23S rRNA + S-adenosyl-L-homocysteine + H(+). Specifically methylates the pseudouridine at position 1915 (m3Psi1915) in 23S rRNA. The polypeptide is Ribosomal RNA large subunit methyltransferase H (Allorhizobium ampelinum (strain ATCC BAA-846 / DSM 112012 / S4) (Agrobacterium vitis (strain S4))).